A 154-amino-acid polypeptide reads, in one-letter code: MILTVKPLQGKECNVQVTEDEKVSTVKELVSERLNIPASQQRLLYKGKALADEHRLSDYSIGPEAKLNLVVRPAGERSGVAGMASSSSAVGGVWQTLSTVLAKHFSPADAAKVQEQLVKDYERSLRQLSMDDIERLAGRLLHPDSEGMDTSYMD.

A Ubiquitin-like domain is found at 1–76 (MILTVKPLQG…LNLVVRPAGE (76 aa)).

In terms of assembly, component of the BAT3 complex.

Its subcellular location is the cytoplasm. It is found in the cytosol. Component of the BAT3 complex, a multiprotein complex involved in the post-translational delivery of tail-anchored (TA) membrane proteins to the endoplasmic reticulum membrane. TA membrane proteins, also named type II transmembrane proteins, contain a single C-terminal transmembrane region. In Oncorhynchus mykiss (Rainbow trout), this protein is Ubiquitin-like protein 4A-A (ubl4aa).